Reading from the N-terminus, the 244-residue chain is MNPEATELLLAGAQELGLDVAPVLDQFAALLVLLQEGNARFNLTALKTERDIVLKHFVDSLTCLGGGHLDGNHQVVDLGTGAGFPTLPLALMRAELQFTPVDSTRKKVEFVRATAEALGLQNVRPVAGRAETLTRQPEHRDRYDRVVVRAVAALPILAELALPFLRPGGLLVAQKGPISPEELRAGQRAAGELGGRVTEVEAFTLPVLGDARTLVVVEKLRDTPDRYPRREGVPNQQPLFWSAK.

S-adenosyl-L-methionine-binding positions include Gly-79, Phe-84, 102–104, 130–131, and Arg-149; these read DST and AE. The segment at 225-244 is disordered; sequence DRYPRREGVPNQQPLFWSAK. The span at 234 to 244 shows a compositional bias: polar residues; the sequence is PNQQPLFWSAK.

It belongs to the methyltransferase superfamily. RNA methyltransferase RsmG family.

The protein resides in the cytoplasm. Functionally, specifically methylates the N7 position of a guanine in 16S rRNA. The sequence is that of Ribosomal RNA small subunit methyltransferase G from Deinococcus deserti (strain DSM 17065 / CIP 109153 / LMG 22923 / VCD115).